The sequence spans 147 residues: Hemoglobin subunit beta (147 aa).

The residue at position 2 (Val2) is an N-acetylvaline. The region spanning 3–147 (HLTGEEKSAV…VANALAHKYH (145 aa)) is the Globin domain. Phosphothreonine is present on Thr13. Ser45 is modified (phosphoserine). Residue Lys60 is modified to N6-acetyllysine. His64 serves as a coordination point for heme b. Lys83 is subject to N6-acetyllysine. His93 contacts heme b. Residue Cys94 is modified to S-nitrosocysteine. Lys145 bears the N6-acetyllysine mark.

It belongs to the globin family. Heterotetramer of two alpha chains and two beta chains. In terms of tissue distribution, red blood cells.

Its function is as follows. Involved in oxygen transport from the lung to the various peripheral tissues. The protein is Hemoglobin subunit beta (HBB) of Callithrix jacchus (White-tufted-ear marmoset).